Reading from the N-terminus, the 288-residue chain is Small ribosomal subunit protein uS2 (288 aa).

Residues 255–288 are disordered; the sequence is ANNRDHKNNKNNSTIDNAENLKEENLVGGSNNES.

The protein belongs to the universal ribosomal protein uS2 family.

The polypeptide is Small ribosomal subunit protein uS2 (Ehrlichia chaffeensis (strain ATCC CRL-10679 / Arkansas)).